The chain runs to 209 residues: MPSEPNQTRPTRVQPSTAAYPPPNLAEPLPCPRCNSTTTKFCYYNNYNLAQPRYYCKSCRRYWTQGGTLRDVPVGGGTRRSSSKRHRSFSTTATSSSSSSSVITTTTQEPATTEASQTKVTNLISGHGSFASLLGLGSGNGGLDYGFGYGYGLEEMSIGYLGDSSVGEIPVVDGCGGDTWQIGEIEGKSGGDSLIWPGLEISMQTNDVK.

The span at 1–17 shows a compositional bias: polar residues; that stretch reads MPSEPNQTRPTRVQPST. The tract at residues 1-29 is disordered; the sequence is MPSEPNQTRPTRVQPSTAAYPPPNLAEPL. A compositionally biased stretch (pro residues) spans 20–29; it reads YPPPNLAEPL. The Dof-type zinc finger occupies 29–83; it reads LPCPRCNSTTTKFCYYNNYNLAQPRYYCKSCRRYWTQGGTLRDVPVGGGTRRSSS. Positions 31, 34, 56, and 59 each coordinate Zn(2+). Residues 70 to 116 form a disordered region; the sequence is RDVPVGGGTRRSSSKRHRSFSTTATSSSSSSSVITTTTQEPATTEAS. The span at 89 to 116 shows a compositional bias: low complexity; it reads FSTTATSSSSSSSVITTTTQEPATTEAS.

It localises to the nucleus. Transcription factor that binds specifically to a 5'-AA[AG]G-3' consensus core sequence. In Arabidopsis thaliana (Mouse-ear cress), this protein is Dof zinc finger protein DOF1.6 (DOF1.6).